Here is a 96-residue protein sequence, read N- to C-terminus: Sec-independent protein translocase protein TatA (96 aa).

The helical transmembrane segment at Met-1–Gly-21 threads the bilayer. The disordered stretch occupies residues Gly-42–Gly-96. Basic and acidic residues predominate over residues Ala-56 to Lys-65. Residues Pro-73–Pro-86 show a composition bias toward pro residues.

It belongs to the TatA/E family. As to quaternary structure, the Tat system comprises two distinct complexes: a TatABC complex, containing multiple copies of TatA, TatB and TatC subunits, and a separate TatA complex, containing only TatA subunits. Substrates initially bind to the TatABC complex, which probably triggers association of the separate TatA complex to form the active translocon.

It localises to the cell inner membrane. Functionally, part of the twin-arginine translocation (Tat) system that transports large folded proteins containing a characteristic twin-arginine motif in their signal peptide across membranes. TatA could form the protein-conducting channel of the Tat system. The chain is Sec-independent protein translocase protein TatA from Rhodospirillum rubrum (strain ATCC 11170 / ATH 1.1.1 / DSM 467 / LMG 4362 / NCIMB 8255 / S1).